The sequence spans 158 residues: Transcription elongation factor GreA (158 aa).

Positions 41–61 (GDLSENAEYHAAKEDQSHNEG) are disordered. The stretch at 51 to 74 (AAKEDQSHNEGRIAELEDKLARAE) forms a coiled coil.

It belongs to the GreA/GreB family.

Its function is as follows. Necessary for efficient RNA polymerase transcription elongation past template-encoded arresting sites. The arresting sites in DNA have the property of trapping a certain fraction of elongating RNA polymerases that pass through, resulting in locked ternary complexes. Cleavage of the nascent transcript by cleavage factors such as GreA or GreB allows the resumption of elongation from the new 3'terminus. GreA releases sequences of 2 to 3 nucleotides. The chain is Transcription elongation factor GreA from Nitrobacter hamburgensis (strain DSM 10229 / NCIMB 13809 / X14).